The following is an 835-amino-acid chain: Phenylalanine--tRNA ligase beta subunit (835 aa).

A tRNA-binding domain is found at 44 to 160; sequence PATTGPLVLG…ESGQPGDDAR (117 aa). One can recognise a B5 domain in the interval 419 to 494; the sequence is PTMPSITMPV…RLEGLEAIPT (76 aa). Residues Asp-472, Asp-478, Glu-481, and Glu-482 each coordinate Mg(2+). The FDX-ACB domain occupies 741 to 834; that stretch reads SAFPALHQDI…AKERLGAEMR (94 aa).

The protein belongs to the phenylalanyl-tRNA synthetase beta subunit family. Type 1 subfamily. Tetramer of two alpha and two beta subunits. The cofactor is Mg(2+).

It localises to the cytoplasm. It carries out the reaction tRNA(Phe) + L-phenylalanine + ATP = L-phenylalanyl-tRNA(Phe) + AMP + diphosphate + H(+). In Corynebacterium efficiens (strain DSM 44549 / YS-314 / AJ 12310 / JCM 11189 / NBRC 100395), this protein is Phenylalanine--tRNA ligase beta subunit.